A 225-amino-acid polypeptide reads, in one-letter code: Probable molybdenum cofactor guanylyltransferase (225 aa).

GTP contacts are provided by residues 20–22 (LAG), Lys33, Asp88, and Asp117. Asp117 is a binding site for Mg(2+).

It belongs to the MobA family. The cofactor is Mg(2+).

The protein localises to the cytoplasm. The catalysed reaction is Mo-molybdopterin + GTP + H(+) = Mo-molybdopterin guanine dinucleotide + diphosphate. Its function is as follows. Transfers a GMP moiety from GTP to Mo-molybdopterin (Mo-MPT) cofactor (Moco or molybdenum cofactor) to form Mo-molybdopterin guanine dinucleotide (Mo-MGD) cofactor. This chain is Probable molybdenum cofactor guanylyltransferase, found in Methanosarcina acetivorans (strain ATCC 35395 / DSM 2834 / JCM 12185 / C2A).